The chain runs to 839 residues: Autophagy-related protein 9A (839 aa).

Residue Ala2 is modified to N-acetylalanine. The Cytoplasmic segment spans residues 2–61; that stretch reads AQFDTEYQRLEASYSDSPPGEEDLLVHVAEGSKSPWHHIENLDLFFSRVYNLHQKNGFTC. The Tyrosine-based sorting signal motif lies at 8 to 11; sequence YQRL. A phosphoserine mark is found at Ser14, Ser16, and Ser18. Residues 62–84 form a helical membrane-spanning segment; it reads MLIGEMFELMQFLFVVAFTTFLV. Over 85-128 the chain is Lumenal; sequence SCVDYDILFANKMVNHSLHPTEPVKVTLPDAFLPAQVCSARIQE. N-linked (GlcNAc...) asparagine glycosylation is present at Asn99. The chain crosses the membrane as a helical span at residues 129–154; that stretch reads NGSLITILVIAGVFWIHRLIKFIYNI. Over 155-290 the chain is Cytoplasmic; sequence CCYWEIHSFY…ELAQRLSNRI (136 aa). An intramembrane segment occupies 291–301; the sequence is LWIGIANFLLC. Residues 302 to 319 are Cytoplasmic-facing; the sequence is PLILIWQILYAFFSYAEV. An intramembrane segment occupies 320 to 328; that stretch reads LKREPGALG. Residues 329 to 371 lie on the Cytoplasmic side of the membrane; sequence ARCWSLYGRCYLRHFNELEHELQSRLNRGYKPASKYMNCFLSP. The helical transmembrane segment at 372–397 threads the bilayer; that stretch reads LLTLLAKNGAFFAGSILAVLIALTIY. At 398 to 406 the chain is on the lumenal side; that stretch reads DEDVLAVEH. A helical transmembrane segment spans residues 407-424; that stretch reads VLTTVTLLGVTVTVCRSF. Topologically, residues 425–470 are cytoplasmic; the sequence is IPDQHMVFCPEQLLRVILAHIHYMPDHWQGNAHRSQTRDEFAQLFQ. The stretch at 471–480 is an intramembrane region; it reads YKAVFILEEL. Over 481–483 the chain is Cytoplasmic; sequence LSP. An intramembrane segment occupies 484–492; that stretch reads IVTPLILIF. The Cytoplasmic portion of the chain corresponds to 493–839; the sequence is CLRPRALEII…DELPPQVHKV (347 aa). Phosphoserine is present on Ser656. 2 disordered regions span residues 657-686 and 717-839; these read PLQPGAAPQGRVPSTMTGSGVDARTASSGS and HKQQ…VHKV. Residues 724 to 736 are compositionally biased toward basic and acidic residues; sequence EPERHVWHRRESD. Phosphoserine is present on residues Ser735, Ser738, Ser741, and Ser828. 2 stretches are compositionally biased toward acidic residues: residues 737–747 and 823–832; these read ESGESAPEEGG and VPEEGSEDEL.

Belongs to the ATG9 family. In terms of assembly, homotrimer; forms a homotrimer with a central pore that forms a path between the two membrane leaflets. Interacts (via cytoplasmic its C-terminus) with ATG2A. Interacts with SUPT20H. Interacts (via the tyrosine-based sorting signal motif) with AP4M1; promoting association with the AP-4 complex. Interacts with ARFIP1 and ARFIP2. Interacts with ATG4A; the interaction is direct and promotes ATG9A trafficking. In terms of processing, ufmylated in a DDRGK1 dependent manner.

The protein resides in the preautophagosomal structure membrane. It localises to the cytoplasmic vesicle. The protein localises to the autophagosome membrane. Its subcellular location is the golgi apparatus. It is found in the trans-Golgi network membrane. The protein resides in the late endosome membrane. It localises to the recycling endosome membrane. The protein localises to the endoplasmic reticulum membrane. Its subcellular location is the mitochondrion membrane. The catalysed reaction is a 1,2-diacyl-sn-glycero-3-phosphocholine(in) = a 1,2-diacyl-sn-glycero-3-phosphocholine(out). It catalyses the reaction a 1,2-diacyl-sn-glycero-3-phospho-L-serine(in) = a 1,2-diacyl-sn-glycero-3-phospho-L-serine(out). The enzyme catalyses a 1,2-diacyl-sn-glycero-3-phosphoethanolamine(in) = a 1,2-diacyl-sn-glycero-3-phosphoethanolamine(out). Its function is as follows. Phospholipid scramblase involved in autophagy by mediating autophagosomal membrane expansion. Cycles between the preautophagosomal structure/phagophore assembly site (PAS) and the cytoplasmic vesicle pool and supplies membrane for the growing autophagosome. Lipid scramblase activity plays a key role in preautophagosomal structure/phagophore assembly by distributing the phospholipids that arrive through ATG2 (ATG2A or ATG2B) from the cytoplasmic to the luminal leaflet of the bilayer, thereby driving autophagosomal membrane expansion. Also required to supply phosphatidylinositol 4-phosphate to the autophagosome initiation site by recruiting the phosphatidylinositol 4-kinase beta (PI4KB) in a process dependent on ARFIP2, but not ARFIP1. In addition to autophagy, also plays a role in necrotic cell death. The protein is Autophagy-related protein 9A of Mus musculus (Mouse).